A 681-amino-acid chain; its full sequence is Glycogen-binding subunit 76A (681 aa).

5 disordered regions span residues 1-20, 53-94, 232-251, 285-391, and 405-435; these read MNDP…SRPP, LGSQ…DLQP, SLTE…NGHL, FADR…ASNL, and QDAT…CRPQ. Acidic residues predominate over residues 59-69; it reads EEGEGNAEDEP. The span at 72–91 shows a compositional bias: polar residues; the sequence is NGTSTNTWVNSHDSEQTVTD. Basic and acidic residues-rich tracts occupy residues 237–251, 297–308, and 321–336; these read EQTK…NGHL, RVQKESSQERVP, and PSDR…RVQE. Positions 353–364 are enriched in polar residues; that stretch reads TESISTEVTTLE. Basic and acidic residues predominate over residues 365–374; the sequence is RSPEESRNDE. The 108-residue stretch at 525 to 632 folds into the CBM21 domain; it reads AVREKQVSLE…NNYGANYCFQ (108 aa). T545 is subject to Phosphothreonine. A phosphoserine mark is found at S547 and S549.

The chain is Glycogen-binding subunit 76A (Gbs-76A) from Drosophila melanogaster (Fruit fly).